A 437-amino-acid chain; its full sequence is Amino-acid acetyltransferase (437 aa).

Positions 289-429 (ENIRLATSFD…EHYNYQRMSK (141 aa)) constitute an N-acetyltransferase domain.

The protein belongs to the acetyltransferase family. ArgA subfamily.

Its subcellular location is the cytoplasm. The enzyme catalyses L-glutamate + acetyl-CoA = N-acetyl-L-glutamate + CoA + H(+). Its pathway is amino-acid biosynthesis; L-arginine biosynthesis; N(2)-acetyl-L-ornithine from L-glutamate: step 1/4. This chain is Amino-acid acetyltransferase, found in Actinobacillus pleuropneumoniae serotype 5b (strain L20).